The primary structure comprises 257 residues: S-methyl-5'-thioadenosine phosphorylase (257 aa).

Residues serine 10 and 50 to 51 (RH) each bind phosphate. A substrate-binding site is contributed by methionine 180. Threonine 181 lines the phosphate pocket. 204 to 206 (DYD) lines the substrate pocket.

The protein belongs to the PNP/MTAP phosphorylase family. MTAP subfamily. As to quaternary structure, homohexamer. Dimer of a homotrimer.

It carries out the reaction S-methyl-5'-thioadenosine + phosphate = 5-(methylsulfanyl)-alpha-D-ribose 1-phosphate + adenine. The protein operates within amino-acid biosynthesis; L-methionine biosynthesis via salvage pathway; S-methyl-5-thio-alpha-D-ribose 1-phosphate from S-methyl-5'-thioadenosine (phosphorylase route): step 1/1. Functionally, catalyzes the reversible phosphorylation of S-methyl-5'-thioadenosine (MTA) to adenine and 5-methylthioribose-1-phosphate. Involved in the breakdown of MTA, a major by-product of polyamine biosynthesis. Responsible for the first step in the methionine salvage pathway after MTA has been generated from S-adenosylmethionine. Has broad substrate specificity with 6-aminopurine nucleosides as preferred substrates. This chain is S-methyl-5'-thioadenosine phosphorylase, found in Pyrococcus horikoshii (strain ATCC 700860 / DSM 12428 / JCM 9974 / NBRC 100139 / OT-3).